Consider the following 114-residue polypeptide: Probable 4-amino-4-deoxy-L-arabinose-phosphoundecaprenol flippase subunit ArnE (114 aa).

The next 2 membrane-spanning stretches (helical) occupy residues 41-61 and 68-88; these read GWLW…LLVL and VAYP…HFVF. The EamA domain maps to 43 to 112; that stretch reads LWLALFSLGL…VIGGVLLLSR (70 aa).

Belongs to the ArnE family. In terms of assembly, heterodimer of ArnE and ArnF.

It is found in the cell inner membrane. It participates in bacterial outer membrane biogenesis; lipopolysaccharide biosynthesis. In terms of biological role, translocates 4-amino-4-deoxy-L-arabinose-phosphoundecaprenol (alpha-L-Ara4N-phosphoundecaprenol) from the cytoplasmic to the periplasmic side of the inner membrane. The chain is Probable 4-amino-4-deoxy-L-arabinose-phosphoundecaprenol flippase subunit ArnE from Pseudomonas fluorescens (strain ATCC BAA-477 / NRRL B-23932 / Pf-5).